Reading from the N-terminus, the 309-residue chain is MNRSDLLENPRTQTESGFLLIHKPVGMTSSDLVVTVRKKLGFKKVGHTGTLDRAASGLMILPIGSCTSFSSVFLEKEKSYEAWVRPGESTDSGDKEGEILESLSKEQTETWFQEHQEKLRDLFEQVPTWETQEAPEVSALKVNGRRRSDLFREGVALVPAVRKIKIYRYELGEFSPESISFQIRVSAGTYIRKIVMDISDRIGFPLRLEKLVRTSIGKLNLNQADSYESLLDGKIKIHPPETILDFPTVEVPDTEVRNVLNGRKIKLEWIPVNEFLLVSPEEEILAWCKKEEHGIHELDYKYLRVFPKN.

Residue Asp52 is the Nucleophile of the active site.

Belongs to the pseudouridine synthase TruB family. Type 1 subfamily.

The catalysed reaction is uridine(55) in tRNA = pseudouridine(55) in tRNA. In terms of biological role, responsible for synthesis of pseudouridine from uracil-55 in the psi GC loop of transfer RNAs. The protein is tRNA pseudouridine synthase B of Leptospira interrogans serogroup Icterohaemorrhagiae serovar copenhageni (strain Fiocruz L1-130).